The following is a 168-amino-acid chain: MEGGGGERAAGVVRRLMAAKAESRKSFSEIGEEAGLTNVYVAQLLRRQAQLKPETAPALRAAVPGLTDDLVALMMEPPFRSYHPDIVHEPAIYRLNEAVMHFGESIKEIINEEFGDGIMSAIDFYCSVDKVQGADGKDRVVVTFDGKYLPYSEQRSDHMMSRLTRKTS.

Active-site residues include Arg-94, Glu-97, and Ser-120.

It belongs to the cyanase family.

It carries out the reaction cyanate + hydrogencarbonate + 3 H(+) = NH4(+) + 2 CO2. Functionally, catalyzes the reaction of cyanate with bicarbonate to produce ammonia and carbon dioxide. The chain is Cyanate hydratase from Oryza sativa subsp. indica (Rice).